A 4363-amino-acid chain; its full sequence is AM-toxin synthetase AMT1 (4363 aa).

The interval 278 to 670 is adenylation 1; it reads AGQAKQRPHA…GSLLYVGRKD (393 aa). The region spanning 810-887 is the Carrier 1 domain; that stretch reads APDSVIARQL…ALAAIAKVIP (78 aa). Position 847 is an O-(pantetheine 4'-phosphoryl)serine (S847). The condensation 1 stretch occupies residues 926–1340; sequence EDVYACTPLQ…TLGQIDVLTS (415 aa). The interval 1368–1765 is adenylation 2; it reads KQARTRPGAI…LGRKDTQIKI (398 aa). A Carrier 2 domain is found at 1884-1961; sequence PPVTDMEKHV…DQARHVTLLT (78 aa). S1922 carries the O-(pantetheine 4'-phosphoryl)serine modification. The interval 1999 to 2410 is condensation 2; it reads EDVYPCTPLQ…ASPSSSTLVS (412 aa). An adenylation 3 region spans residues 2448–2853; sequence RKKALAAPQA…GRKDNQVKIR (406 aa). The Carrier 3 domain occupies 2977–3053; that stretch reads LPSTVMEETL…DLAACCTDRR (77 aa). S3014 is subject to O-(pantetheine 4'-phosphoryl)serine. The tract at residues 3098–3503 is condensation 3; it reads VEDVYPCTPM…ELVSSIETLN (406 aa). A Carrier 4 domain is found at 3730–3806; it reads PAVTAMQLAI…SLAVRATENT (77 aa). S3767 bears the O-(pantetheine 4'-phosphoryl)serine mark. The interval 3850 to 4204 is condensation 4; that stretch reads QDVLPCTSMQ…GLDEIVEHYA (355 aa).

It belongs to the NRP synthetase family.

It participates in mycotoxin biosynthesis. Its function is as follows. Nonribosomal peptide synthetase; part of the gene clusters that mediate the biosynthesis of AM-toxins, host-selective toxins (HSTs) causing Alternaria blotch on apple, a worldwide distributed disease. AM-toxins are cyclic depsipeptides containing the 3 residues 2-hydroxy-isovaleric acid (2-HIV), dehydroalanine, L-alanine which are common for all 3 AM-toxins I to III. The fourth precursor is L-alpha-amino-methoxyphenyl-valeric acid (L-Amv) for AM-toxin I, L-alpha-amino-phenyl-valeric acid (L-Apv) for AM-toxin II, and L-alpha-amino-hydroxyphenyl-valeric acid (L-Ahv) for AM-toxin III. AM-toxins have two target sites for affecting susceptible apple cells; they cause invagination of the plasma membrane and electrolyte loss, and chloroplast disorganization. The non-ribosomal peptide synthetase AMT1 contains 4 catalytic modules and is responsible for activation of each residue in AM-toxin. The aldo-keto reductase AMT2 catalyzes the conversion of 2-keto-isovaleric acid (2-KIV) to 2-hydroxy-isovaleric acid (2-HIV), one of the precursor residues incorporated by AMT1 during AM-toxin biosynthesis, by reduction of its ketone to an alcohol. The cytochrome P450 monooxygenase AMT3 and the thioesterase AMT4 are also important for AM-toxin production, but their exact function within the AM-toxin biosynthesis are not known yet. Up to 21 proteins (including AMT1 to AMT4) are predicted to be involved in AM-toxin biosynthesis since their expression ishighly up-regulated in AM-toxin-producing cultures. This is AM-toxin synthetase AMT1 from Alternaria alternata (Alternaria rot fungus).